The sequence spans 118 residues: Small ribosomal subunit protein uS13 (118 aa).

A disordered region spans residues 94 to 118; sequence SLPVRGQRTKTNARTRKGPRRPIKR.

It belongs to the universal ribosomal protein uS13 family. As to quaternary structure, part of the 30S ribosomal subunit. Forms a loose heterodimer with protein S19. Forms two bridges to the 50S subunit in the 70S ribosome.

Functionally, located at the top of the head of the 30S subunit, it contacts several helices of the 16S rRNA. In the 70S ribosome it contacts the 23S rRNA (bridge B1a) and protein L5 of the 50S subunit (bridge B1b), connecting the 2 subunits; these bridges are implicated in subunit movement. Contacts the tRNAs in the A and P-sites. The polypeptide is Small ribosomal subunit protein uS13 (Dichelobacter nodosus (strain VCS1703A)).